Reading from the N-terminus, the 342-residue chain is Nicotinate-nucleotide--dimethylbenzimidazole phosphoribosyltransferase (342 aa).

The active-site Proton acceptor is the E311.

The protein belongs to the CobT family.

The catalysed reaction is 5,6-dimethylbenzimidazole + nicotinate beta-D-ribonucleotide = alpha-ribazole 5'-phosphate + nicotinate + H(+). It participates in nucleoside biosynthesis; alpha-ribazole biosynthesis; alpha-ribazole from 5,6-dimethylbenzimidazole: step 1/2. Functionally, catalyzes the synthesis of alpha-ribazole-5'-phosphate from nicotinate mononucleotide (NAMN) and 5,6-dimethylbenzimidazole (DMB). The sequence is that of Nicotinate-nucleotide--dimethylbenzimidazole phosphoribosyltransferase from Photobacterium profundum (strain SS9).